Here is a 129-residue protein sequence, read N- to C-terminus: Small ribosomal subunit protein uS11 (129 aa).

The protein belongs to the universal ribosomal protein uS11 family. Part of the 30S ribosomal subunit. Interacts with proteins S7 and S18. Binds to IF-3.

Located on the platform of the 30S subunit, it bridges several disparate RNA helices of the 16S rRNA. Forms part of the Shine-Dalgarno cleft in the 70S ribosome. This Desulfovibrio desulfuricans (strain ATCC 27774 / DSM 6949 / MB) protein is Small ribosomal subunit protein uS11.